The chain runs to 368 residues: CST complex subunit STN1 (368 aa).

The segment at 2–192 (AVSLGDDDAD…KCYDQPFKMP (191 aa)) is interaction with CTC1. Residues 58-162 (VDVLGIVVYK…EIKATSFYKV (105 aa)) constitute a DNA-binding region (OB). Winged helix-turn-helix (wHTH) regions lie at residues 201 to 295 (AGGS…NVTE) and 296 to 368 (QDKD…YIVL).

This sequence belongs to the CTC1 family. As to quaternary structure, component of the CST complex.

Its subcellular location is the nucleus. The protein resides in the chromosome. It is found in the telomere. In terms of biological role, component of the CST complex proposed to act as a specialized replication factor promoting DNA replication under conditions of replication stress or natural replication barriers such as the telomere duplex. The CST complex binds single-stranded DNA with high affinity in a sequence-independent manner, while isolated subunits bind DNA with low affinity by themselves. Initially the CST complex has been proposed to protect telomeres from DNA degradation. However, the CST complex has been shown to be involved in several aspects of telomere replication. The chain is CST complex subunit STN1 from Danio rerio (Zebrafish).